The chain runs to 303 residues: Glutathione transport system permease protein GsiD (303 aa).

6 helical membrane-spanning segments follow: residues 40–60 (AMTA…ARWI), 105–125 (LAAG…LGLL), 144–164 (LFAF…GSGI), 165–185 (ANVI…LVRG), 222–242 (IVVF…SLSF), and 266–286 (VIAP…VLAF). The ABC transmembrane type-1 domain maps to 101–290 (AQISLAAGVF…LTVLAFNLLG (190 aa)).

Belongs to the binding-protein-dependent transport system permease family. The complex is composed of two ATP-binding proteins (GsiA), two transmembrane proteins (GsiC and GsiD) and a solute-binding protein (GsiB).

Its subcellular location is the cell inner membrane. Functionally, part of the ABC transporter complex GsiABCD involved in glutathione import. Probably responsible for the translocation of the substrate across the membrane. The protein is Glutathione transport system permease protein GsiD of Escherichia coli O157:H7.